Reading from the N-terminus, the 247-residue chain is 3-deoxy-manno-octulosonate cytidylyltransferase (247 aa).

It belongs to the KdsB family.

The protein localises to the cytoplasm. The enzyme catalyses 3-deoxy-alpha-D-manno-oct-2-ulosonate + CTP = CMP-3-deoxy-beta-D-manno-octulosonate + diphosphate. It participates in nucleotide-sugar biosynthesis; CMP-3-deoxy-D-manno-octulosonate biosynthesis; CMP-3-deoxy-D-manno-octulosonate from 3-deoxy-D-manno-octulosonate and CTP: step 1/1. The protein operates within bacterial outer membrane biogenesis; lipopolysaccharide biosynthesis. Its function is as follows. Activates KDO (a required 8-carbon sugar) for incorporation into bacterial lipopolysaccharide in Gram-negative bacteria. The polypeptide is 3-deoxy-manno-octulosonate cytidylyltransferase (Leptospira interrogans serogroup Icterohaemorrhagiae serovar Lai (strain 56601)).